The chain runs to 439 residues: Lipid-A-disaccharide synthase (439 aa).

The protein belongs to the LpxB family.

The enzyme catalyses a lipid X + a UDP-2-N,3-O-bis[(3R)-3-hydroxyacyl]-alpha-D-glucosamine = a lipid A disaccharide + UDP + H(+). The protein operates within bacterial outer membrane biogenesis; LPS lipid A biosynthesis. In terms of biological role, condensation of UDP-2,3-diacylglucosamine and 2,3-diacylglucosamine-1-phosphate to form lipid A disaccharide, a precursor of lipid A, a phosphorylated glycolipid that anchors the lipopolysaccharide to the outer membrane of the cell. In Xanthomonas axonopodis pv. citri (strain 306), this protein is Lipid-A-disaccharide synthase.